Consider the following 187-residue polypeptide: tRNA (mnm(5)s(2)U34)-methyltransferase (187 aa).

Positions 31, 33, 51, 53, 77, and 78 each coordinate S-adenosyl-L-methionine.

It belongs to the methyltransferase superfamily. MnmM family. Homodimer.

It carries out the reaction 5-aminomethyl-2-thiouridine(34) in tRNA + S-adenosyl-L-methionine = 5-methylaminomethyl-2-thiouridine(34) in tRNA + S-adenosyl-L-homocysteine + H(+). It participates in tRNA modification. Its function is as follows. Involved in the biosynthesis of 5-methylaminomethyl-2-thiouridine (mnm(5)s(2)U) at the wobble position (U34) in tRNA. Catalyzes the transfer of a methyl group from S-adenosyl-L-methionine to nm(5)s(2)U34 to form mnm(5)s(2)U34. In Staphylococcus aureus (strain NCTC 8325 / PS 47), this protein is tRNA (mnm(5)s(2)U34)-methyltransferase.